The primary structure comprises 343 residues: MDSAFIIEKSVVIVAVFALTMLMAMYSTWAERKVAAFLQDRVGPNRAGWGGLLQPLADGLKLFSKEEFEPNTPNKFLFVVGPAIAMSTALMTSAVIPWGDKLHLFGRDILLQATDIDNALLYIFAVVSVGVYGIMIGGWASNNKFSLMGAVRAASQMVSYEVAMGLSMIALLMMTGTLSLKEISAQQSGMNWNVFYQPVSFLIFLICAFAETNRTPFDLAECESELIGGYHTEYSSMKMGFYLFAEYANMFISSAILAILFFGGYNYPGMQWMVENVGVNTANILGFLALFIKICGFIFFYMWVRWTIPRFRYDQLMHLGWRILIPLAILNIMVTGICLLLFK.

8 helical membrane passes run 5–25 (FIIE…LMAM), 76–96 (FLFV…SAVI), 119–139 (ALLY…IGGW), 158–178 (VSYE…TGTL), 190–210 (MNWN…CAFA), 243–263 (LFAE…LFFG), 284–304 (ILGF…YMWV), and 323–343 (ILIP…LLFK).

It belongs to the complex I subunit 1 family. In terms of assembly, NDH-1 is composed of 14 different subunits. Subunits NuoA, H, J, K, L, M, N constitute the membrane sector of the complex.

Its subcellular location is the cell inner membrane. The catalysed reaction is a quinone + NADH + 5 H(+)(in) = a quinol + NAD(+) + 4 H(+)(out). In terms of biological role, NDH-1 shuttles electrons from NADH, via FMN and iron-sulfur (Fe-S) centers, to quinones in the respiratory chain. The immediate electron acceptor for the enzyme in this species is believed to be ubiquinone. Couples the redox reaction to proton translocation (for every two electrons transferred, four hydrogen ions are translocated across the cytoplasmic membrane), and thus conserves the redox energy in a proton gradient. This subunit may bind ubiquinone. The sequence is that of NADH-quinone oxidoreductase subunit H from Flavobacterium psychrophilum (strain ATCC 49511 / DSM 21280 / CIP 103535 / JIP02/86).